A 488-amino-acid chain; its full sequence is Malonate-semialdehyde dehydrogenase (488 aa).

Ala150, Phe152, Lys176, Glu179, Arg180, Ser229, and Thr251 together coordinate NAD(+). Cys284 functions as the Nucleophile in the catalytic mechanism. Position 382 (Glu382) interacts with NAD(+).

It belongs to the aldehyde dehydrogenase family. IolA subfamily. Homotetramer.

The enzyme catalyses 3-oxopropanoate + NAD(+) + CoA + H2O = hydrogencarbonate + acetyl-CoA + NADH + H(+). It catalyses the reaction 2-methyl-3-oxopropanoate + NAD(+) + CoA + H2O = propanoyl-CoA + hydrogencarbonate + NADH + H(+). It functions in the pathway polyol metabolism; myo-inositol degradation into acetyl-CoA; acetyl-CoA from myo-inositol: step 7/7. In terms of biological role, catalyzes the oxidation of malonate semialdehyde (MSA) and methylmalonate semialdehyde (MMSA) into acetyl-CoA and propanoyl-CoA, respectively. Is involved in a myo-inositol catabolic pathway. Bicarbonate, and not CO2, is the end-product of the enzymatic reaction. This chain is Malonate-semialdehyde dehydrogenase, found in Listeria monocytogenes serovar 1/2a (strain ATCC BAA-679 / EGD-e).